We begin with the raw amino-acid sequence, 161 residues long: 2-C-methyl-D-erythritol 2,4-cyclodiphosphate synthase (161 aa).

A divalent metal cation is bound by residues aspartate 10 and histidine 12. Residues 10–12 (DVH) and 36–37 (HS) contribute to the 4-CDP-2-C-methyl-D-erythritol 2-phosphate site. Histidine 44 contributes to the a divalent metal cation binding site. 4-CDP-2-C-methyl-D-erythritol 2-phosphate-binding positions include 58–60 (DIG), 63–67 (FSDTD), and arginine 144.

This sequence belongs to the IspF family. Homotrimer. The cofactor is a divalent metal cation.

It carries out the reaction 4-CDP-2-C-methyl-D-erythritol 2-phosphate = 2-C-methyl-D-erythritol 2,4-cyclic diphosphate + CMP. It participates in isoprenoid biosynthesis; isopentenyl diphosphate biosynthesis via DXP pathway; isopentenyl diphosphate from 1-deoxy-D-xylulose 5-phosphate: step 4/6. In terms of biological role, involved in the biosynthesis of isopentenyl diphosphate (IPP) and dimethylallyl diphosphate (DMAPP), two major building blocks of isoprenoid compounds. Catalyzes the conversion of 4-diphosphocytidyl-2-C-methyl-D-erythritol 2-phosphate (CDP-ME2P) to 2-C-methyl-D-erythritol 2,4-cyclodiphosphate (ME-CPP) with a corresponding release of cytidine 5-monophosphate (CMP). This Burkholderia ambifaria (strain MC40-6) protein is 2-C-methyl-D-erythritol 2,4-cyclodiphosphate synthase.